The chain runs to 61 residues: MAKDFVTGKHTRFGNTRSHALNHSRRSWKPNLQKVRILVDGKPKRVWVSARALKSGKVTRV.

Residues 1–26 (MAKDFVTGKHTRFGNTRSHALNHSRR) form a disordered region.

The protein belongs to the bacterial ribosomal protein bL28 family.

The sequence is that of Large ribosomal subunit protein bL28 from Pediococcus pentosaceus (strain ATCC 25745 / CCUG 21536 / LMG 10740 / 183-1w).